We begin with the raw amino-acid sequence, 137 residues long: Ribonuclease P protein component (137 aa).

It belongs to the RnpA family. Consists of a catalytic RNA component (M1 or rnpB) and a protein subunit.

The enzyme catalyses Endonucleolytic cleavage of RNA, removing 5'-extranucleotides from tRNA precursor.. Its function is as follows. RNaseP catalyzes the removal of the 5'-leader sequence from pre-tRNA to produce the mature 5'-terminus. It can also cleave other RNA substrates such as 4.5S RNA. The protein component plays an auxiliary but essential role in vivo by binding to the 5'-leader sequence and broadening the substrate specificity of the ribozyme. The protein is Ribonuclease P protein component of Porphyromonas gingivalis (strain ATCC BAA-308 / W83).